The primary structure comprises 219 residues: 2-hydroxy-3-keto-5-methylthiopentenyl-1-phosphate phosphatase (219 aa).

This sequence belongs to the HAD-like hydrolase superfamily. MtnX family.

The enzyme catalyses 2-hydroxy-5-methylsulfanyl-3-oxopent-1-enyl phosphate + H2O = 1,2-dihydroxy-5-(methylsulfanyl)pent-1-en-3-one + phosphate. Its pathway is amino-acid biosynthesis; L-methionine biosynthesis via salvage pathway; L-methionine from S-methyl-5-thio-alpha-D-ribose 1-phosphate: step 4/6. Functionally, dephosphorylates 2-hydroxy-3-keto-5-methylthiopentenyl-1-phosphate (HK-MTPenyl-1-P) yielding 1,2-dihydroxy-3-keto-5-methylthiopentene (DHK-MTPene). The polypeptide is 2-hydroxy-3-keto-5-methylthiopentenyl-1-phosphate phosphatase (Bacillus cereus (strain ZK / E33L)).